The chain runs to 140 residues: Large ribosomal subunit protein uL16 (140 aa).

Residues 1–14 are compositionally biased toward basic residues; that stretch reads MLSPRRTKFRKQQR. Positions 1–22 are disordered; the sequence is MLSPRRTKFRKQQRGRMEGAAT.

This sequence belongs to the universal ribosomal protein uL16 family. In terms of assembly, part of the 50S ribosomal subunit.

In terms of biological role, binds 23S rRNA and is also seen to make contacts with the A and possibly P site tRNAs. The sequence is that of Large ribosomal subunit protein uL16 from Cyanothece sp. (strain PCC 7425 / ATCC 29141).